Here is a 304-residue protein sequence, read N- to C-terminus: uncharacterized protein (304 aa).

Positions Met-1–Ser-183 are disordered. The segment covering Pro-132–Ser-166 has biased composition (low complexity). 2 helical membrane passes run Leu-206 to Val-226 and Phe-265 to Val-285.

It to M.leprae ML0007.

It is found in the cell membrane. This is an uncharacterized protein from Mycobacterium tuberculosis (strain ATCC 25618 / H37Rv).